The primary structure comprises 274 residues: Anamorsin homolog (274 aa).

Residues 1-154 (MDRTRKQCSV…KKPSWKIGSS (154 aa)) are N-terminal SAM-like domain. A linker region spans residues 154–185 (SFALKKSTKGSVKVNLDDDLIDEDSLLTEEDM). The [2Fe-2S] cluster site is built by Cys-196, Cys-205, Cys-208, and Cys-210. The tract at residues 196-210 (CEVGSTRKACKNCTC) is fe-S binding site A. 4 residues coordinate [4Fe-4S] cluster: Cys-235, Cys-238, Cys-246, and Cys-249. 2 consecutive short sequence motifs (cx2C motif) follow at residues 235–238 (CGSC) and 246–249 (CSTC). Residues 235-249 (CGSCGLGDAFRCSTC) form a fe-S binding site B region.

This sequence belongs to the anamorsin family. As to quaternary structure, monomer. It depends on [2Fe-2S] cluster as a cofactor. [4Fe-4S] cluster serves as cofactor.

Its subcellular location is the cytoplasm. The protein localises to the mitochondrion intermembrane space. Component of the cytosolic iron-sulfur (Fe-S) protein assembly (CIA) machinery. Required for the maturation of extramitochondrial Fe-S proteins. Part of an electron transfer chain functioning in an early step of cytosolic Fe-S biogenesis, facilitating the de novo assembly of a [4Fe-4S] cluster on the cytosolic Fe-S scaffold complex. Electrons are transferred from NADPH via a FAD- and FMN-containing diflavin oxidoreductase. Together with the diflavin oxidoreductase, also required for the assembly of the diferric tyrosyl radical cofactor of ribonucleotide reductase (RNR), probably by providing electrons for reduction during radical cofactor maturation in the catalytic small subunit. This chain is Anamorsin homolog, found in Ricinus communis (Castor bean).